The primary structure comprises 226 residues: Uracil-DNA glycosylase (226 aa).

Residue D64 is the Proton acceptor of the active site.

Belongs to the uracil-DNA glycosylase (UDG) superfamily. UNG family.

It is found in the cytoplasm. It catalyses the reaction Hydrolyzes single-stranded DNA or mismatched double-stranded DNA and polynucleotides, releasing free uracil.. Functionally, excises uracil residues from the DNA which can arise as a result of misincorporation of dUMP residues by DNA polymerase or due to deamination of cytosine. The protein is Uracil-DNA glycosylase of Proteus mirabilis (strain HI4320).